The following is a 444-amino-acid chain: Probable D-serine dehydratase (444 aa).

An N6-(pyridoxal phosphate)lysine modification is found at K118.

This sequence belongs to the serine/threonine dehydratase family. DsdA subfamily. Pyridoxal 5'-phosphate is required as a cofactor.

The catalysed reaction is D-serine = pyruvate + NH4(+). This Acinetobacter baumannii (strain ATCC 17978 / DSM 105126 / CIP 53.77 / LMG 1025 / NCDC KC755 / 5377) protein is Probable D-serine dehydratase.